Here is a 150-residue protein sequence, read N- to C-terminus: Cell division protein SepF (150 aa).

Belongs to the SepF family. In terms of assembly, homodimer. Interacts with FtsZ.

It localises to the cytoplasm. Functionally, cell division protein that is part of the divisome complex and is recruited early to the Z-ring. Probably stimulates Z-ring formation, perhaps through the cross-linking of FtsZ protofilaments. Its function overlaps with FtsA. This Clostridium beijerinckii (strain ATCC 51743 / NCIMB 8052) (Clostridium acetobutylicum) protein is Cell division protein SepF.